Reading from the N-terminus, the 183-residue chain is MGIDINHKHDRKVRRTEVKSQDVYLRLLVKLYRYLARRTNAKFNQIVLRRLFMSRINRPPLSLSRLARHMKKPTREGLIAVVVGTITNDTRLYKVPKMTVAALHVTEKARARILDAGGEILTFDQLALRAPTGRKTVLIQGQRNAREAVRHFGPAPGAPRSHTKPYVRSKGHEQAKPSRRSNV.

Residues 151–183 form a disordered region; sequence HFGPAPGAPRSHTKPYVRSKGHEQAKPSRRSNV.

It belongs to the eukaryotic ribosomal protein eL18 family.

The protein localises to the cytoplasm. The protein is Large ribosomal subunit protein eL18 (RpL18) of Plutella xylostella (Diamondback moth).